A 572-amino-acid polypeptide reads, in one-letter code: Urocanate hydratase (572 aa).

NAD(+)-binding positions include 48–49, glutamine 126, 172–174, aspartate 192, 238–239, 259–263, 268–269, and tyrosine 317; these read GG, GMG, NA, QTSAH, and YL. Cysteine 405 is a catalytic residue. Glycine 487 lines the NAD(+) pocket. Basic and acidic residues predominate over residues 550–559; that stretch reads EGDEAHEGDA. The segment at 550–572 is disordered; it reads EGDEAHEGDAAHGSGAAREGDGV.

This sequence belongs to the urocanase family. The cofactor is NAD(+).

Its subcellular location is the cytoplasm. It carries out the reaction 4-imidazolone-5-propanoate = trans-urocanate + H2O. The protein operates within amino-acid degradation; L-histidine degradation into L-glutamate; N-formimidoyl-L-glutamate from L-histidine: step 2/3. Catalyzes the conversion of urocanate to 4-imidazolone-5-propionate. This chain is Urocanate hydratase, found in Streptomyces coelicolor (strain ATCC BAA-471 / A3(2) / M145).